Consider the following 187-residue polypeptide: Elongation factor P (187 aa).

This sequence belongs to the elongation factor P family.

The protein resides in the cytoplasm. The protein operates within protein biosynthesis; polypeptide chain elongation. Its function is as follows. Involved in peptide bond synthesis. Stimulates efficient translation and peptide-bond synthesis on native or reconstituted 70S ribosomes in vitro. Probably functions indirectly by altering the affinity of the ribosome for aminoacyl-tRNA, thus increasing their reactivity as acceptors for peptidyl transferase. The protein is Elongation factor P of Arthrobacter sp. (strain FB24).